A 252-amino-acid polypeptide reads, in one-letter code: 5-oxoprolinase subunit A (252 aa).

The protein belongs to the LamB/PxpA family. Forms a complex composed of PxpA, PxpB and PxpC.

It catalyses the reaction 5-oxo-L-proline + ATP + 2 H2O = L-glutamate + ADP + phosphate + H(+). Its function is as follows. Catalyzes the cleavage of 5-oxoproline to form L-glutamate coupled to the hydrolysis of ATP to ADP and inorganic phosphate. This is 5-oxoprolinase subunit A from Bordetella pertussis (strain Tohama I / ATCC BAA-589 / NCTC 13251).